The primary structure comprises 308 residues: Probable manganese-dependent inorganic pyrophosphatase (308 aa).

The Mn(2+) site is built by H9, D13, D15, D74, H96, and D148.

The protein belongs to the PPase class C family. Mn(2+) serves as cofactor.

It is found in the cytoplasm. The enzyme catalyses diphosphate + H2O = 2 phosphate + H(+). The polypeptide is Probable manganese-dependent inorganic pyrophosphatase (Oceanobacillus iheyensis (strain DSM 14371 / CIP 107618 / JCM 11309 / KCTC 3954 / HTE831)).